Here is a 383-residue protein sequence, read N- to C-terminus: Small ribosomal subunit protein mS31 (383 aa).

The transit peptide at methionine 1–leucine 21 directs the protein to the mitochondrion. A coiled-coil region spans residues valine 158–glutamate 187.

Belongs to the mitochondrion-specific ribosomal protein mS31 family. In terms of assembly, component of the mitochondrial ribosome small subunit (28S) which comprises a 12S rRNA and about 30 distinct proteins.

It localises to the mitochondrion. This Caenorhabditis elegans protein is Small ribosomal subunit protein mS31 (mrps-31).